Consider the following 1841-residue polypeptide: Cell division control protein 12 (1841 aa).

2 stretches are compositionally biased toward polar residues: residues 1-25 (MRNS…TPSA) and 46-63 (SIES…QSVT). 3 disordered regions span residues 1–63 (MRNS…QSVT), 78–134 (NSHN…GPRL), and 152–181 (PPVH…RTKH). Positions 232 to 620 (TRPPSLDQLI…RILLNSKVSN (389 aa)) constitute a GBD/FH3 domain. Residues 674–715 (LGAEDLIAKLNKEVEDQKDVILSQKRTNETLKTEIDALQKSH) adopt a coiled-coil conformation. In terms of domain architecture, FH1 spans 740-972 (GSTNSKERII…VSPAVSNNIS (233 aa)). Residues 980–1391 (TGLTRRPTRR…QHRRLNLVNN (412 aa)) form the FH2 domain. Residues 1260-1290 (TEAAKLNIEAIEQECSELIRGCQNLQIDCDS) are a coiled coil. Disordered stretches follow at residues 1445–1661 (EAPN…ENNL), 1696–1715 (TTTT…INTI), and 1735–1758 (KSNK…GSNK). Composition is skewed to polar residues over residues 1447 to 1456 (PNTSTKSSPA) and 1483 to 1497 (SEST…NITP). Basic and acidic residues predominate over residues 1499–1516 (KKGEVSSKAKKGYNYEKR). Residues 1539–1553 (GRSASYTFSDPSSLE) are compositionally biased toward polar residues. Ser1541 carries the phosphoserine modification. Residue Tyr1544 is modified to Phosphotyrosine. Positions 1554–1567 (DSNRQKPFNGEKFR) are enriched in basic and acidic residues. Positions 1568-1577 (RFSSKSRRGS) are enriched in basic residues. A compositionally biased stretch (polar residues) spans 1594-1604 (INNNQTSPQNK). Basic and acidic residues predominate over residues 1605-1621 (PSKESLKSDTISNEKKV). Over residues 1630 to 1641 (NLLTPTISNGTR) the composition is skewed to polar residues.

This sequence belongs to the formin homology family. BNI1 subfamily. Interacts with profilin and actin at the FH1 and FH2 domains respectively.

The protein localises to the nucleus. Its function is as follows. Plays a role in the cell cycle. Involved in cytokinesis. Component of the cell division ring. In the absence of profilin, caps the barbed end of actin filaments, thus preventing subunit addition and dissociation. In the presence of profilin, nucleates actin filaments that grow rapidly from their barbed ends. This Schizosaccharomyces pombe (strain 972 / ATCC 24843) (Fission yeast) protein is Cell division control protein 12 (cdc12).